The chain runs to 375 residues: MEVKVRRDELVPFVAMAIMEACTIALTIMAKTALTGGMSPFVFVVYTNAFGSILLLPFSFLFHRNERTEQSIFSWPLLVRVFFLGFTGIFMFQNLAFVGLRFSSPIVVCAMGLQIPSFSFLLSIILGRSKLDWRNTSTRAKLMGTIVSLSGAFVEELYKGPFIRPASSASPNRFLKSVPKLLVYYNLPDNWFLGCIFLAVAVFSVSLFNVVQTGTVKKYPHVMKVASFYSIVGTIQCLLFSLFMERDLSAWKIQPNFDLYLIIATGTFGSVIRTSVHVKCTQMKGPYYVPLFKPFGIFWATLFGTSFFVNSLHYGSVLGAAIAGVGYFTVSWGQLKESEEKQSSNEERKSIKTIHHRDEDEYKVPLLINQEESPV.

A run of 10 helical transmembrane segments spans residues 10-30 (LVPF…TIMA), 41-61 (FVFV…FSFL), 72-92 (IFSW…IFMF), 106-126 (IVVC…SIIL), 143-163 (MGTI…GPFI), 191-211 (WFLG…FNVV), 225-245 (VASF…LFME), 259-278 (LYLI…SVHV), 289-309 (VPLF…SFFV), and 312-332 (LHYG…TVSW). The region spanning 25-134 (ALTIMAKTAL…ILGRSKLDWR (110 aa)) is the EamA domain. The tract at residues 337–356 (ESEEKQSSNEERKSIKTIHH) is disordered.

Belongs to the drug/metabolite transporter (DMT) superfamily. Plant drug/metabolite exporter (P-DME) (TC 2.A.7.4) family.

The protein resides in the membrane. The chain is WAT1-related protein At1g70260 from Arabidopsis thaliana (Mouse-ear cress).